Consider the following 312-residue polypeptide: Taste receptor type 2 member 103 (312 aa).

At 1 to 16 (MVVTMRAALRLMLIST) the chain is on the extracellular side. Residues 17 to 37 (VSLELIIGILANVFIALVNII) traverse the membrane as a helical segment. The Cytoplasmic portion of the chain corresponds to 38–65 (DWIKRGKISAVDKIYMGLAISRTAFVLS). The chain crosses the membrane as a helical span at residues 66-86 (VITGFLIAFLDPASLGIGIMI). The Extracellular segment spans residues 87-92 (RLLTMS). Residues 93 to 113 (WTVTNHFSVWFATCLSIFYFL) form a helical membrane-spanning segment. Over 114–133 (KITNFSNTVFLALKWKVKKV) the chain is Cytoplasmic. A helical membrane pass occupies residues 134 to 154 (VSVTLVVSLIILFINVIVIHI). The Extracellular segment spans residues 155–184 (YTDRFQVNMVQKCGANNTLRAYGLFLSIST). Asn-170 carries N-linked (GlcNAc...) asparagine glycosylation. Residues 185–205 (VFTFIPFTASLTMFLLLIFSL) traverse the membrane as a helical segment. Over 206 to 229 (WRHLKTMHHNATGSRDVSTVAHIK) the chain is Cytoplasmic. The helical transmembrane segment at 230–250 (GLQTVVAFLLLYTVFAMSLFS) threads the bilayer. Topologically, residues 251–264 (QSLSIDAQHTNLLS) are extracellular. Residues 265–285 (HFLRCIGVAFPSGHSCALILG) form a helical membrane-spanning segment. Over 286-312 (NNKLRQASLSVIFWLRCKYKHTENQGP) the chain is Cytoplasmic.

It belongs to the G-protein coupled receptor T2R family.

Its subcellular location is the membrane. Functionally, gustducin-coupled receptor implicated in the perception of bitter compounds in the oral cavity and the gastrointestinal tract. Signals through PLCB2 and the calcium-regulated cation channel TRPM5. The polypeptide is Taste receptor type 2 member 103 (Rattus norvegicus (Rat)).